A 334-amino-acid chain; its full sequence is MKATTTAVALLVAAAAMAAQVVAEQCGSQAGGALCPNCLCCSSYGWCGSTSDYCGDGCQSQCDGCGGGGGGGGGGGGGGGGGGGAVEAVVSKELFEQLLLHRNDAACPARGFYTYDALVTAAAAFPDFAATGDDEARKREVAAFLGQTSHETTGGWATAPDGPYSWGYCFKEEIGATASYCVPSAEWPCAPDKKYFGRGPIQLSYNYNYGPAGEAIGEDLLNNPELVASDPVVSFKTALWFWMTPQSPKPSCHDVITGQWTPSSGDIAAGRVPGYGVITNIINGGLECGFGPDDRVANRIGFYQRYCDVLGIGYGSNLDCYDQRPFNSGLTAAQ.

The first 23 residues, 1–23 (MKATTTAVALLVAAAAMAAQVVA), serve as a signal peptide directing secretion. Residues 24-64 (EQCGSQAGGALCPNCLCCSSYGWCGSTSDYCGDGCQSQCDG) enclose the Chitin-binding type-1 domain. Disulfide bonds link C26–C41, C35–C47, C38–C65, C40–C54, C58–C62, C107–C169, C181–C189, and C288–C320. Catalysis depends on E151, which acts as the Proton donor.

It belongs to the glycosyl hydrolase 19 family. Chitinase class I subfamily. In terms of tissue distribution, expressed at high levels in roots, sheaths and meristems.

It carries out the reaction Random endo-hydrolysis of N-acetyl-beta-D-glucosaminide (1-&gt;4)-beta-linkages in chitin and chitodextrins.. Its function is as follows. May play a role in defense against fungal pathogens containing chitin. In Oryza sativa subsp. japonica (Rice), this protein is Chitinase 9 (Cht9).